Reading from the N-terminus, the 167-residue chain is Ammonium/H(+) antiporter subunit AmhM (167 aa).

In terms of domain architecture, RCK C-terminal spans 79–163; it reads IDRIKLIRKQ…IQKFEELCAC (85 aa).

Interacts with AmhT.

It localises to the cell membrane. Functionally, modulates the activity of the ammonium/proton antiporter AmhT. This Alkalihalophilus pseudofirmus (strain ATCC BAA-2126 / JCM 17055 / OF4) (Bacillus pseudofirmus) protein is Ammonium/H(+) antiporter subunit AmhM (amhM).